Consider the following 210-residue polypeptide: MSKFIVIEGLEGAGKSTAIKNVLATLAKHGITSPVTTREPGGTPLAEKMRELVKQGHPDEPLTDMAELLLLYAARAQLVGNVIKPALAKGEWVVGDRHDLSSQAYQGGGRGFDRDLMMTMRNTVLGDFKPDLTIYMDIDPKLGLQRASARGELDRIEQMKLDFFERSRERYLEFANSDESIITIDAGQDLETVTQSIITALEAWLVNNGY.

An ATP-binding site is contributed by 9 to 16 (GLEGAGKS).

This sequence belongs to the thymidylate kinase family.

The enzyme catalyses dTMP + ATP = dTDP + ADP. Its function is as follows. Phosphorylation of dTMP to form dTDP in both de novo and salvage pathways of dTTP synthesis. The chain is Thymidylate kinase from Aliivibrio fischeri (strain MJ11) (Vibrio fischeri).